A 67-amino-acid chain; its full sequence is MSDARITELETKLIFAEDLIETLNQTVIRQQAQLDQIQQQLRLLHRQLQDALAREAPAPGNEPPPHY.

It belongs to the SlyX family.

This Thiobacillus denitrificans (strain ATCC 25259 / T1) protein is Protein SlyX homolog.